We begin with the raw amino-acid sequence, 368 residues long: tRNA 2-selenouridine synthase (368 aa).

The Rhodanese domain maps to 12-136 (FLGDAPLLDT…MRGFLLETIE (125 aa)). Cysteine 95 functions as the S-selanylcysteine intermediate in the catalytic mechanism.

This sequence belongs to the SelU family. Monomer.

It catalyses the reaction 5-methylaminomethyl-2-thiouridine(34) in tRNA + selenophosphate + (2E)-geranyl diphosphate + H2O + H(+) = 5-methylaminomethyl-2-selenouridine(34) in tRNA + (2E)-thiogeraniol + phosphate + diphosphate. The enzyme catalyses 5-methylaminomethyl-2-thiouridine(34) in tRNA + (2E)-geranyl diphosphate = 5-methylaminomethyl-S-(2E)-geranyl-thiouridine(34) in tRNA + diphosphate. It carries out the reaction 5-methylaminomethyl-S-(2E)-geranyl-thiouridine(34) in tRNA + selenophosphate + H(+) = 5-methylaminomethyl-2-(Se-phospho)selenouridine(34) in tRNA + (2E)-thiogeraniol. The catalysed reaction is 5-methylaminomethyl-2-(Se-phospho)selenouridine(34) in tRNA + H2O = 5-methylaminomethyl-2-selenouridine(34) in tRNA + phosphate. In terms of biological role, involved in the post-transcriptional modification of the uridine at the wobble position (U34) of tRNA(Lys), tRNA(Glu) and tRNA(Gln). Catalyzes the conversion of 2-thiouridine (S2U-RNA) to 2-selenouridine (Se2U-RNA). Acts in a two-step process involving geranylation of 2-thiouridine (S2U) to S-geranyl-2-thiouridine (geS2U) and subsequent selenation of the latter derivative to 2-selenouridine (Se2U) in the tRNA chain. This chain is tRNA 2-selenouridine synthase, found in Bordetella bronchiseptica (strain ATCC BAA-588 / NCTC 13252 / RB50) (Alcaligenes bronchisepticus).